The following is a 440-amino-acid chain: Protein eva-1 homolog C (440 aa).

Positions 1–13 (MLLPGHPRPPPAP) are enriched in pro residues. The interval 1–23 (MLLPGHPRPPPAPQSAQNQGLRR) is disordered. Residues 1 to 48 (MLLPGHPRPPPAPQSAQNQGLRRQVEPPGQLLRLFYCTVLVCSKETSA) form the signal peptide. Residues 49–321 (LTDFSGYLTK…AYIRAHPERA (273 aa)) are Extracellular-facing. Residues asparagine 62, asparagine 109, and asparagine 165 are each glycosylated (N-linked (GlcNAc...) asparagine). The SUEL-type lectin 1 domain maps to 67–159 (ACDGDYLNLQ…KYLLVSFKCQ (93 aa)). One can recognise an SUEL-type lectin 2 domain in the interval 168-260 (VCENQELKLH…KYLTVAYACV (93 aa)). The chain crosses the membrane as a helical span at residues 322 to 342 (ALLFMSSVCIGLLLTLCALVI). Residues 343–440 (RVSCTKDFRE…SLPRNVGHFY (98 aa)) are Cytoplasmic-facing. Residues 364–384 (SDKAEEDSEEDLEEEDSSDSQ) form a disordered region. Acidic residues predominate over residues 367-381 (AEEDSEEDLEEEDSS).

The protein belongs to the EVA1 family. Ubiquitous.

The protein resides in the cell membrane. Functionally, binds heparin. This is Protein eva-1 homolog C (Eva1c) from Mus musculus (Mouse).